A 359-amino-acid polypeptide reads, in one-letter code: Membrane-bound lytic murein transglycosylase C (359 aa).

An N-terminal signal peptide occupies residues 1–16 (MKKYLALALIAPLLIS). Cysteine 17 carries N-palmitoyl cysteine lipidation. Cysteine 17 carries S-diacylglycerol cysteine lipidation.

This sequence belongs to the transglycosylase Slt family.

Its subcellular location is the cell outer membrane. The enzyme catalyses Exolytic cleavage of the (1-&gt;4)-beta-glycosidic linkage between N-acetylmuramic acid (MurNAc) and N-acetylglucosamine (GlcNAc) residues in peptidoglycan, from either the reducing or the non-reducing ends of the peptidoglycan chains, with concomitant formation of a 1,6-anhydrobond in the MurNAc residue.. Its function is as follows. Murein-degrading enzyme. May play a role in recycling of muropeptides during cell elongation and/or cell division. The protein is Membrane-bound lytic murein transglycosylase C of Escherichia coli O127:H6 (strain E2348/69 / EPEC).